Consider the following 221-residue polypeptide: PKHD-type hydroxylase P9215_13741 (221 aa).

One can recognise a Fe2OG dioxygenase domain in the interval 80 to 174; the sequence is RIHGTMFTKT…RFVVVGWIES (95 aa). H98, D100, and H155 together coordinate Fe cation. R165 is a 2-oxoglutarate binding site.

Fe(2+) is required as a cofactor. L-ascorbate serves as cofactor.

The chain is PKHD-type hydroxylase P9215_13741 from Prochlorococcus marinus (strain MIT 9215).